The sequence spans 132 residues: Matrix protein (132 aa).

Its subcellular location is the virion membrane. Its function is as follows. Envelope protein that may play a role in host-cell attachment and viral genome entry. This is Matrix protein from Halorubrum pleomorphic virus 1 (HRPV-1).